The chain runs to 398 residues: Bone morphogenetic protein 2-A (398 aa).

Positions 1 to 23 (MVAGIHSLLLLLFYQVLLSGCTG) are cleaved as a signal peptide. The propeptide occupies 24–284 (LIPEEGKRKY…GHALHKRQKR (261 aa)). Residues asparagine 137, asparagine 202, and asparagine 340 are each glycosylated (N-linked (GlcNAc...) asparagine). 3 disulfide bridges follow: cysteine 298–cysteine 363, cysteine 327–cysteine 395, and cysteine 331–cysteine 397.

The protein belongs to the TGF-beta family. In terms of assembly, homodimer; disulfide-linked.

Its subcellular location is the secreted. Functionally, induces cartilage and bone formation. The protein is Bone morphogenetic protein 2-A (bmp2-a) of Xenopus laevis (African clawed frog).